A 728-amino-acid chain; its full sequence is Ubiquitin carboxyl-terminal hydrolase BAP1 (728 aa).

A UCH catalytic domain is found at Gly4–Pro235. Positions Arg56–Arg60 match the Arg-finger motif motif. Cys91 acts as the Nucleophile in catalysis. His169 functions as the Proton donor in the catalytic mechanism. The interval Thr273–Lys333 is disordered. Residue Ser292 is modified to Phosphoserine. Residues Asn363–Tyr366 carry the HBM-like motif motif. A phosphoserine mark is found at Ser369 and Ser395. Disordered regions lie at residues Gln372 to Leu436 and Ser463 to Thr523. A compositionally biased stretch (acidic residues) spans Ser395–Val408. Polar residues-rich tracts occupy residues Ser427–Leu436 and Thr479–Thr523. Thr492 is subject to Phosphothreonine. Residues Ser520, Ser536, and Ser584 each carry the phosphoserine modification. A disordered region spans residues Leu574–Gly623. Positions Ser581–Gly596 are enriched in low complexity. Residues Ser595–Ser720 are interaction with BRCA1. Residues Leu597–Gly613 are compositionally biased toward basic and acidic residues. Residues Lys629–Lys660 adopt a coiled-coil conformation. The segment at Glu641–Gly685 is interaction with YY1. The 29-residue stretch at Asn669 to Val697 folds into the ULD domain. Positions Arg698 to Arg700 are interaction with nucleosomal DNA forming a DNA clamp with ASXL1. Positions Arg698–Arg721 match the Classical bipartite Nuclear localization signal (NLS) motif. The interval Gly702–Gln728 is disordered. Residues Arg712 to Gln728 are positively charged C-terminal extension (CTE). The Nuclear localization signal signature appears at Arg716–Arg721. Residues Arg716–Tyr723 carry the Non-classical PY-nuclear localization signal (PY-NLS) motif.

It belongs to the peptidase C12 family. BAP1 subfamily. Core component of the polycomb repressive deubiquitinase (PR-DUB) complex, at least composed of BAP1, one of ASXL1, ASXL2 or (probably) ASXL3, and one of MBD5 or MBD6. The PR-DUB core associates with a number of accessory proteins, including FOXK1, FOXK2, KDM1B, HCFC1, YY1 and OGT; KDM1B specifically associates with ASXL2 PR-DUB complexes. The BAP1 deubiquitinase activity is not required for PR-DUB assembly. Homodimerizes (via coiled-coil hinge-region between the UCH and ULD domains) to mediate assembly of 2 copies of the BAP1-ASXL heterodimer into a bisymmetric tetramer; dimerization enhances association with nucleosomes. The PR-DUB complex associates with nucleosomes to mediate deubiquitination of 'lys-120' of histone H2AK118ub1 substrates; the association requires the positively charged C-terminal tail of BAP1. Interacts (via ULD domain) with ASXL1 (via DEUBAD domain); the interaction is direct and forms a ubiquitin binding cleft. The interaction with ASXL1 stabilizes BAP1 but is not required for nucleosome binding. Associates (via C-terminus) with nucleosome and chromatosome complexes through direct interaction with DNA and the histone3/4 dimer; this association displaces the histone-2A C-terminal tail, extending and orienting the H2AK118ub1 substrate towards the BAP1 deubiquitinase active site. Also interacts (via arginine finger) directly with the histone H2A-H2B acidic patch; this interaction is not critical for nucleosome-chromatosome association but may play a role in orienting the H2AK118ub1 substrate towards the PR-DUB complex active site. Interacts with BRCA1 (via the RING finger). Interacts (via HBM-like motif) with HCFC1. Interacts (via a C-terminal region overlapping the ULD domain) with YY1; the interaction is direct and requires the interaction with HCFC1. Interacts (when phosphorylated at Thr-492) with FOXK1. Interacts (when phosphorylated at Thr-492) with FOXK2; leading to recruitment of the PR-DUB complex and repression of FOXK2 target genes. Interacts (via non-classical PY-NLS) with TNPO1/transportin-1 (via HEAT repeats 8-12); the interaction is direct, mediates BAP1 nuclear localization and disrupts BAP1 homodimerization. Interacts (via C-terminus) with KPNA1/importin alpha5 and KPNA2/importin alpha1; these interactions can contribute to BAP1 nuclear localization but are less important than the interaction with TNPO1/transportin-1. The interaction with TNPO1/transportin-1 disrupts homodimerization and blocks ubiquitination by UBE2O. In terms of processing, ubiquitinated: monoubiquitinated at multiple sites within its nuclear localization signal (NLS) BY UBE2O, leading to cytoplasmic retention. Able to mediate autodeubiquitination via intramolecular interactions to counteract cytoplasmic retention. Monoubiquitinated on at least 4 sites near or within its PY-NLS. Highly expressed in mammary glands, testis and ovary. Up-regulated in mammary glands during puberty, pregnancy, and as a result of parity.

It localises to the cytoplasm. The protein resides in the nucleus. The protein localises to the chromosome. It carries out the reaction Thiol-dependent hydrolysis of ester, thioester, amide, peptide and isopeptide bonds formed by the C-terminal Gly of ubiquitin (a 76-residue protein attached to proteins as an intracellular targeting signal).. Deubiquitinating enzyme that plays a key role in chromatin by mediating deubiquitination of histone H2A and HCFC1. Catalytic component of the polycomb repressive deubiquitinase (PR-DUB) complex, a complex that specifically mediates deubiquitination of histone H2A monoubiquitinated at 'Lys-120' (H2AK119ub1). Does not deubiquitinate monoubiquitinated histone H2B. The PR-DUB complex is an epigenetic regulator of gene expression and acts as a transcriptional coactivator, affecting genes involved in development, cell communication, signaling, cell proliferation and cell viability. Antagonizes PRC1 mediated H2AK119ub1 monoubiquitination. As part of the PR-DUB complex, associates with chromatin enriched in histone marks H3K4me1, H3K4me3, and H3K27Ac, but not in H3K27me3. Acts as a regulator of cell growth by mediating deubiquitination of HCFC1 N-terminal and C-terminal chains, with some specificity toward 'Lys-48'-linked polyubiquitin chains compared to 'Lys-63'-linked polyubiquitin chains. Deubiquitination of HCFC1 does not lead to increase stability of HCFC1. Interferes with the BRCA1 and BARD1 heterodimer activity by inhibiting their ability to mediate ubiquitination and autoubiquitination. It however does not mediate deubiquitination of BRCA1 and BARD1. Able to mediate autodeubiquitination via intramolecular interactions to counteract monoubiquitination at the nuclear localization signal (NLS), thereby protecting it from cytoplasmic sequestration. Negatively regulates epithelial-mesenchymal transition (EMT) of trophoblast stem cells during placental development by regulating genes involved in epithelial cell integrity, cell adhesion and cytoskeletal organization. The chain is Ubiquitin carboxyl-terminal hydrolase BAP1 (Bap1) from Mus musculus (Mouse).